The following is a 312-amino-acid chain: MTAQFEHVSVLMDETIDALAIKPDGIYMDGTFGRGGHSGQILARLGSEGRLQAIDQDPQAIKSAEKFADDPRFAIAHTRFSNLYGVAEQNDLIGKVDGILLDIGVSSPQLDDALRGFSFMKDGPLDMRMDPTTGRSAAQWLAEAELDDITHVIKKLGEEKFGKRIAHKVLEVREHTPITTTKQLADLVDEAVPVKDKFKHPATRTFQAIRIYINSELEEIQTALQSAIKVLKPGGRLVVISFHSLEDRIVKQFIRKQSRGETLPRGLPLTDAQINQNLTLKAVGKAIKPSAAEVERNPRSRSSVLRIAQRLG.

Residues 35–37 (GGH), Asp-55, Phe-80, Asp-102, and Gln-109 contribute to the S-adenosyl-L-methionine site.

The protein belongs to the methyltransferase superfamily. RsmH family.

Its subcellular location is the cytoplasm. It carries out the reaction cytidine(1402) in 16S rRNA + S-adenosyl-L-methionine = N(4)-methylcytidine(1402) in 16S rRNA + S-adenosyl-L-homocysteine + H(+). Specifically methylates the N4 position of cytidine in position 1402 (C1402) of 16S rRNA. The sequence is that of Ribosomal RNA small subunit methyltransferase H from Pseudoalteromonas translucida (strain TAC 125).